The following is a 371-amino-acid chain: MGSLPDQSSCEEFTDSQQDKMTKLLAMQLGPEYISRRSGPGGGSVTYLEAWKAIELANEIFGFNGWSSSIQDIHVDYVEETKEKKFNVGISVIVRVTLKDGSFHEDVGYGSIENCRVKALAYEKCKKEGTTDALKRALRNFGSSMGNCLYDKRYIQKILKMAPAQAEFNYDNLLRANKRPYARFAQKVSTPIESHANKSVKLEHKNSIEKKISNVDKPISDLIENDIHESLPALQNPPIQSHSETDLYADEELDSILMHHERPPIPESPRVEEFEELLNQFEGDEKVSVDKIDAHDKMTEAQVVKIPPVQFMNARVAAAENPHIKHEGMAFQLHKKSNSILKSSNIDHNRSMPIRRPSLTSNNSANTFSTK.

The tract at residues 346–371 is disordered; the sequence is IDHNRSMPIRRPSLTSNNSANTFSTK. Residues 358 to 371 show a composition bias toward polar residues; that stretch reads SLTSNNSANTFSTK.

The protein belongs to the RAD52 family. As to quaternary structure, interacts with rph51 and rph54.

Its function is as follows. Active in the repair of DNA damage and in mating-type switching. Probably involved in the repair of DNA double-strands breaks. Has a role in promoting S phase completion. In Schizosaccharomyces pombe (strain 972 / ATCC 24843) (Fission yeast), this protein is DNA repair and recombination protein rti1 (rti1).